A 283-amino-acid chain; its full sequence is Acetyl-coenzyme A carboxylase carboxyl transferase subunit beta (283 aa).

One can recognise a CoA carboxyltransferase N-terminal domain in the interval 23-283; it reads LWIKCPSCSE…DFLMAGKAAA (261 aa). The Zn(2+) site is built by cysteine 27, cysteine 30, cysteine 46, and cysteine 49. The C4-type zinc finger occupies 27–49; that stretch reads CPSCSEMLFTKEYEDNLSVCPHC.

The protein belongs to the AccD/PCCB family. As to quaternary structure, acetyl-CoA carboxylase is a heterohexamer composed of biotin carboxyl carrier protein (AccB), biotin carboxylase (AccC) and two subunits each of ACCase subunit alpha (AccA) and ACCase subunit beta (AccD). Zn(2+) is required as a cofactor.

The protein resides in the cytoplasm. The enzyme catalyses N(6)-carboxybiotinyl-L-lysyl-[protein] + acetyl-CoA = N(6)-biotinyl-L-lysyl-[protein] + malonyl-CoA. Its pathway is lipid metabolism; malonyl-CoA biosynthesis; malonyl-CoA from acetyl-CoA: step 1/1. Component of the acetyl coenzyme A carboxylase (ACC) complex. Biotin carboxylase (BC) catalyzes the carboxylation of biotin on its carrier protein (BCCP) and then the CO(2) group is transferred by the transcarboxylase to acetyl-CoA to form malonyl-CoA. This chain is Acetyl-coenzyme A carboxylase carboxyl transferase subunit beta, found in Novosphingobium aromaticivorans (strain ATCC 700278 / DSM 12444 / CCUG 56034 / CIP 105152 / NBRC 16084 / F199).